Here is a 385-residue protein sequence, read N- to C-terminus: Glucans biosynthesis protein C (385 aa).

The next 10 helical transmembrane spans lie at 17–37 (AWLMLLGIPFHISLIYSSHTW), 60–80 (MQVFFVISGYFSYMLFLRYPL), 91–111 (VGIPMLTAIPLLTLPQFIMLQ), 137–157 (ISHLWFLLVLVVMTTLCVWIF), 173–193 (KFSMVKLSVIFLCLGIGYAVI), 212–232 (FIVMQTLFYLPFFILGALAFI), 245–262 (RGSTLAAALAFVAYLLNQ), 274–294 (TESVITMVLGLWMVNVVFSFG), 311–331 (ASLFIYLVHHPLTLFFGAYIT), and 338–358 (WLGFLCGLIFVVGIAIILYEI).

Belongs to the acyltransferase 3 family. OpgC subfamily.

The protein localises to the cell membrane. The protein operates within glycan metabolism; osmoregulated periplasmic glucan (OPG) biosynthesis. Necessary for the succinyl substitution of periplasmic glucans. Could catalyze the transfer of succinyl residues from the cytoplasmic side of the membrane to the nascent glucan backbones on the periplasmic side of the membrane. The protein is Glucans biosynthesis protein C of Escherichia coli O81 (strain ED1a).